Reading from the N-terminus, the 496-residue chain is N-succinylglutamate 5-semialdehyde dehydrogenase (496 aa).

229-234 lines the NAD(+) pocket; the sequence is GSYATG. Active-site residues include Glu-252 and Cys-286.

The protein belongs to the aldehyde dehydrogenase family. AstD subfamily.

The catalysed reaction is N-succinyl-L-glutamate 5-semialdehyde + NAD(+) + H2O = N-succinyl-L-glutamate + NADH + 2 H(+). The protein operates within amino-acid degradation; L-arginine degradation via AST pathway; L-glutamate and succinate from L-arginine: step 4/5. In terms of biological role, catalyzes the NAD-dependent reduction of succinylglutamate semialdehyde into succinylglutamate. The polypeptide is N-succinylglutamate 5-semialdehyde dehydrogenase (Legionella pneumophila subsp. pneumophila (strain Philadelphia 1 / ATCC 33152 / DSM 7513)).